Here is a 174-residue protein sequence, read N- to C-terminus: MERKTVLYIAVSLDGMIAKEDGSIDWLDEFEGEGDNGYSDFYQTVDTVILGRSTYEHVKVLTPVFPYQDKTCYVFTGSPDSYQDEHVTFINEGARAFTARLKQEKGSNIWIAGGAELVNDFMKEDAIDEFIITVIPVVLGSGIPLFHELTNETKLRLKGTKQFGQAVQLHYVRA.

Residues 126–146 (AIDEFIITVIPVVLGSGIPLF) traverse the membrane as a helical segment.

The protein to B.subtilis YyaP.

It is found in the membrane. This is an uncharacterized protein from Bacillus subtilis (strain 168).